The sequence spans 272 residues: Formamidopyrimidine-DNA glycosylase (272 aa).

Pro2 acts as the Schiff-base intermediate with DNA in catalysis. The active-site Proton donor is the Glu3. Lys58 (proton donor; for beta-elimination activity) is an active-site residue. DNA-binding residues include His92, Arg111, and Arg153. The segment at 238–272 (AVYGRQGQSCPRCGGLVERCRLGQRSTFFCPACQR) adopts an FPG-type zinc-finger fold. Arg262 serves as the catalytic Proton donor; for delta-elimination activity.

Belongs to the FPG family. Monomer. It depends on Zn(2+) as a cofactor.

It carries out the reaction Hydrolysis of DNA containing ring-opened 7-methylguanine residues, releasing 2,6-diamino-4-hydroxy-5-(N-methyl)formamidopyrimidine.. The enzyme catalyses 2'-deoxyribonucleotide-(2'-deoxyribose 5'-phosphate)-2'-deoxyribonucleotide-DNA = a 3'-end 2'-deoxyribonucleotide-(2,3-dehydro-2,3-deoxyribose 5'-phosphate)-DNA + a 5'-end 5'-phospho-2'-deoxyribonucleoside-DNA + H(+). Involved in base excision repair of DNA damaged by oxidation or by mutagenic agents. Acts as a DNA glycosylase that recognizes and removes damaged bases. Has a preference for oxidized purines, such as 7,8-dihydro-8-oxoguanine (8-oxoG). Has AP (apurinic/apyrimidinic) lyase activity and introduces nicks in the DNA strand. Cleaves the DNA backbone by beta-delta elimination to generate a single-strand break at the site of the removed base with both 3'- and 5'-phosphates. In Laribacter hongkongensis (strain HLHK9), this protein is Formamidopyrimidine-DNA glycosylase.